Reading from the N-terminus, the 269-residue chain is MEQKTEHNVTLHGFNNLTKSLSFNMYDICYTKTKEEREAYIEYIDEQYNAERLTSILKNVSDIIGAHVLNVAKQDYVPQGASVTFLVSEGPVVEVPTESYEESPGPLPENVVLQLDKSHITVHTYPEYHPTEGISTFRADIDVSTCGEISPLKALNYLIRSFDTDLMTIDYKVRGFTRDIHGYKLFIDHDISSIQNYIPEEIKELFHMIDVNVYQDNIFHTKCKRREFDLNNYLFGYTKDRLTPEEQEDITKQLQIEMDEIYYGKNFVN.

S118 (schiff-base intermediate with substrate; via pyruvic acid) is an active-site residue. S118 carries the post-translational modification Pyruvic acid (Ser); by autocatalysis. H123 acts as the Proton acceptor; for processing activity in catalysis. C146 acts as the Proton donor; for catalytic activity in catalysis.

This sequence belongs to the prokaryotic AdoMetDC family. Type 2 subfamily. As to quaternary structure, heterooctamer of four alpha and four beta chains arranged as a tetramer of alpha/beta heterodimers. Pyruvate is required as a cofactor. In terms of processing, is synthesized initially as an inactive proenzyme. Formation of the active enzyme involves a self-maturation process in which the active site pyruvoyl group is generated from an internal serine residue via an autocatalytic post-translational modification. Two non-identical subunits are generated from the proenzyme in this reaction, and the pyruvate is formed at the N-terminus of the alpha chain, which is derived from the carboxyl end of the proenzyme. The post-translation cleavage follows an unusual pathway, termed non-hydrolytic serinolysis, in which the side chain hydroxyl group of the serine supplies its oxygen atom to form the C-terminus of the beta chain, while the remainder of the serine residue undergoes an oxidative deamination to produce ammonia and the pyruvoyl group blocking the N-terminus of the alpha chain.

It catalyses the reaction S-adenosyl-L-methionine + H(+) = S-adenosyl 3-(methylsulfanyl)propylamine + CO2. It participates in amine and polyamine biosynthesis; S-adenosylmethioninamine biosynthesis; S-adenosylmethioninamine from S-adenosyl-L-methionine: step 1/1. Functionally, catalyzes the decarboxylation of S-adenosylmethionine to S-adenosylmethioninamine (dcAdoMet), the propylamine donor required for the synthesis of the polyamines spermine and spermidine from the diamine putrescine. This chain is S-adenosylmethionine decarboxylase proenzyme, found in Brevibacillus brevis (strain 47 / JCM 6285 / NBRC 100599).